We begin with the raw amino-acid sequence, 307 residues long: MPIYLDLIWMLNFGLDTILLMLCAVVLKRNYKWWRLLLGGFIGSLIVLLMFTPFSHLMVHPAIKILFSFFMVLMTFGYKRLRFFFENLLTFYFATFVVGGGLMGVHFLFQDQFLVLNQMVDTKSPQFGDPISWIFVLIGFPLLSYFSKTRVDDLRIKNITFDQLVDVEIILNEQTLSMKGLIDSGNQLVDPLTKTPVMIVTADSLKEILPEGLMELSKNVQSFSHSEDIDQEWYSKVRFVPYRSVGQANQLLLALKPDMVRLVHQSNTIEVTKVLVGISHTTLSVEKQYECIVHPKLIVIGEVSSAS.

Transmembrane regions (helical) follow at residues 7–27 (LIWMLNFGLDTILLMLCAVVL), 36–56 (LLLGGFIGSLIVLLMFTPFSH), 57–77 (LMVHPAIKILFSFFMVLMTFG), 89–109 (LTFYFATFVVGGGLMGVHFLF), and 127–147 (FGDPISWIFVLIGFPLLSYFS). Asp-183 is an active-site residue.

This sequence belongs to the peptidase U4 family. As to quaternary structure, self-associates. Interacts with SigE. Interacts with SpoIIR.

It is found in the cell membrane. Its function is as follows. Probable aspartic protease that is responsible for the proteolytic cleavage of the RNA polymerase sigma E factor (SigE/spoIIGB) to yield the active peptide in the mother cell during sporulation. Responds to a signal from the forespore that is triggered by the extracellular signal protein SpoIIR. The polypeptide is Sporulation sigma-E factor-processing peptidase (Priestia megaterium (strain ATCC 12872 / QMB1551) (Bacillus megaterium)).